Reading from the N-terminus, the 161-residue chain is Nucleotide-binding protein Csal_2524 (161 aa).

The protein belongs to the YajQ family.

Its function is as follows. Nucleotide-binding protein. In Chromohalobacter salexigens (strain ATCC BAA-138 / DSM 3043 / CIP 106854 / NCIMB 13768 / 1H11), this protein is Nucleotide-binding protein Csal_2524.